We begin with the raw amino-acid sequence, 128 residues long: Probable 4-amino-4-deoxy-L-arabinose-phosphoundecaprenol flippase subunit ArnF (128 aa).

Topologically, residues 1–2 (MG) are cytoplasmic. The helical transmembrane segment at 3–23 (LMWGLFSVIIASVAQLSLGFA) threads the bilayer. Residues 24–35 (ASHLPPMTHLWD) lie on the Periplasmic side of the membrane. Residues 36–56 (FIAALLAFGLDARILLLGLLG) traverse the membrane as a helical segment. Residues 57–76 (YLLSVFCWYKTLHKLALSKA) lie on the Cytoplasmic side of the membrane. A helical transmembrane segment spans residues 77-97 (YALLSMSYVLVWIASMVLPGW). Residues 98–100 (EGT) lie on the Periplasmic side of the membrane. Residues 101–121 (FSLKALLGVACIMSGLMLIFL) form a helical membrane-spanning segment. The Cytoplasmic segment spans residues 122-128 (PMTKQRY).

It belongs to the ArnF family. As to quaternary structure, heterodimer of ArnE and ArnF.

It localises to the cell inner membrane. The protein operates within bacterial outer membrane biogenesis; lipopolysaccharide biosynthesis. Functionally, translocates 4-amino-4-deoxy-L-arabinose-phosphoundecaprenol (alpha-L-Ara4N-phosphoundecaprenol) from the cytoplasmic to the periplasmic side of the inner membrane. This is Probable 4-amino-4-deoxy-L-arabinose-phosphoundecaprenol flippase subunit ArnF from Escherichia coli (strain 55989 / EAEC).